The following is a 276-amino-acid chain: Rhomboid protease GlpG (276 aa).

6 consecutive transmembrane segments (helical) span residues 94 to 114, 142 to 162, 169 to 189, 192 to 212, 229 to 249, and 250 to 270; these read GPVTWIVMLACVVVYIAMSLI, IFMHFSLMHILFNLLWWWYLG, LGSGKLIVITVISALLSGYVQ, FSGPWFGGLSGVVYALMGYVW, LIIFALLWIVAGWFDWFGMSM, and ANGAHIAGLIVGLAMAFVDTL. The Nucleophile role is filled by Ser-201. His-254 is a catalytic residue.

It belongs to the peptidase S54 family.

The protein resides in the cell inner membrane. It carries out the reaction Cleaves type-1 transmembrane domains using a catalytic dyad composed of serine and histidine that are contributed by different transmembrane domains.. Functionally, rhomboid-type serine protease that catalyzes intramembrane proteolysis. The polypeptide is Rhomboid protease GlpG (Salmonella typhi).